The following is a 159-amino-acid chain: Probable NADH dehydrogenase [ubiquinone] 1 alpha subcomplex subunit 12 (159 aa).

The protein belongs to the complex I NDUFA12 subunit family. Complex I is composed of at least 49 different subunits.

The protein localises to the mitochondrion inner membrane. Its function is as follows. Accessory subunit of the mitochondrial membrane respiratory chain NADH dehydrogenase (Complex I), that is believed not to be involved in catalysis. Complex I functions in the transfer of electrons from NADH to the respiratory chain. The immediate electron acceptor for the enzyme is believed to be ubiquinone. This Arabidopsis thaliana (Mouse-ear cress) protein is Probable NADH dehydrogenase [ubiquinone] 1 alpha subcomplex subunit 12.